The chain runs to 230 residues: ATP-dependent dethiobiotin synthetase BioD (230 aa).

12–17 (DVGKTV) lines the ATP pocket. T16 lines the Mg(2+) pocket. K37 is an active-site residue. T41 serves as a coordination point for substrate. ATP is bound by residues D49, 108–111 (EGAG), 168–169 (GS), and 198–200 (PEG). 2 residues coordinate Mg(2+): D49 and E108.

Belongs to the dethiobiotin synthetase family. As to quaternary structure, homodimer. Requires Mg(2+) as cofactor.

It localises to the cytoplasm. The enzyme catalyses (7R,8S)-7,8-diammoniononanoate + CO2 + ATP = (4R,5S)-dethiobiotin + ADP + phosphate + 3 H(+). It functions in the pathway cofactor biosynthesis; biotin biosynthesis; biotin from 7,8-diaminononanoate: step 1/2. In terms of biological role, catalyzes a mechanistically unusual reaction, the ATP-dependent insertion of CO2 between the N7 and N8 nitrogen atoms of 7,8-diaminopelargonic acid (DAPA, also called 7,8-diammoniononanoate) to form a ureido ring. The protein is ATP-dependent dethiobiotin synthetase BioD of Corynebacterium kroppenstedtii (strain DSM 44385 / JCM 11950 / CIP 105744 / CCUG 35717).